A 1371-amino-acid polypeptide reads, in one-letter code: Pleckstrin homology-like domain family B member 1 (1371 aa).

Serine 51 bears the Phosphoserine mark. The FHA domain occupies 64–125; sequence TVIGSAARDI…LTQGCMLCLG (62 aa). Asymmetric dimethylarginine is present on arginine 131. The disordered stretch occupies residues 153-182; the sequence is GPTYNPGSAESESLVNGNHTAQPATRAPSA. Over residues 157-175 the composition is skewed to polar residues; sequence NPGSAESESLVNGNHTAQP. Residues serine 192, serine 220, and serine 223 each carry the phosphoserine modification. Disordered regions lie at residues 211–336 and 368–573; these read AAGK…TDSP and PSSG…RVPI. Composition is skewed to low complexity over residues 252 to 273 and 296 to 312; these read SPAF…HSPS and LQPP…SDSP. Phosphoserine is present on residues serine 325 and serine 335. The segment covering 368-377 has biased composition (polar residues); sequence PSSGARSQPA. 8 positions are modified to phosphoserine: serine 382, serine 405, serine 431, serine 445, serine 463, serine 472, serine 491, and serine 503. Positions 464–477 are enriched in low complexity; sequence PSLSRRALSPLPAR. The span at 483 to 493 shows a compositional bias: basic and acidic residues; it reads KLSREVAESPR. Arginine 514 is subject to Omega-N-methylarginine. Residues serine 520 and serine 522 each carry the phosphoserine modification. A Phosphothreonine modification is found at threonine 524. Serine 535, serine 541, serine 553, serine 557, serine 565, serine 580, serine 585, and serine 683 each carry phosphoserine. The segment covering 547–559 has biased composition (polar residues); it reads GSLTGASPRQSPR. 2 disordered regions span residues 672–714 and 942–1020; these read ESGG…GAKH and GLAA…QNGT. 2 stretches are compositionally biased toward basic and acidic residues: residues 682–696 and 703–714; these read ESME…KEEC and QQEHEDAPGAKH. Residues 688 to 798 adopt a coiled-coil conformation; it reads DEENLKEECS…ETGIQKDRDK (111 aa). A phosphoserine mark is found at serine 976 and serine 1022. Positions 976–997 are enriched in low complexity; that stretch reads SPLPRTRSGPLPSSSGSSSSSS. Residues 1124-1143 form a disordered region; that stretch reads SMETSISTGGNSACSPDNMS. Residues 1150–1216 adopt a coiled-coil conformation; the sequence is MGKIEEMEKM…QQLVEKEVKL (67 aa). The region spanning 1261–1364 is the PH domain; it reads SKVCRGYLIK…WMDVIVTGAE (104 aa).

This chain is Pleckstrin homology-like domain family B member 1 (Phldb1), found in Mus musculus (Mouse).